Here is a 487-residue protein sequence, read N- to C-terminus: Glutamate--tRNA ligase 2 (487 aa).

Positions 24–34 (PSPTGFLHIGG) match the 'HIGH' region motif. A 'KMSKS' region motif is present at residues 258-262 (KLSKR). Lys261 is an ATP binding site.

It belongs to the class-I aminoacyl-tRNA synthetase family. Glutamate--tRNA ligase type 1 subfamily. In terms of assembly, monomer.

It is found in the cytoplasm. The enzyme catalyses tRNA(Glu) + L-glutamate + ATP = L-glutamyl-tRNA(Glu) + AMP + diphosphate. Catalyzes the attachment of glutamate to tRNA(Glu) in a two-step reaction: glutamate is first activated by ATP to form Glu-AMP and then transferred to the acceptor end of tRNA(Glu). The chain is Glutamate--tRNA ligase 2 from Novosphingobium aromaticivorans (strain ATCC 700278 / DSM 12444 / CCUG 56034 / CIP 105152 / NBRC 16084 / F199).